Here is a 155-residue protein sequence, read N- to C-terminus: Sweet protein mabinlin-2 (155 aa).

Positions 1 to 20 (MAKLIFLFATLALFVLLANA) are cleaved as a signal peptide. The propeptide occupies 21–35 (SIQTTVIEVDEEEDN). Residue Gln36 is modified to Pyrrolidone carboxylic acid. 4 cysteine pairs are disulfide-bonded: Cys40-Cys103, Cys53-Cys92, Cys93-Cys141, and Cys105-Cys149. The interval 64–86 (GGQPDELEDEVEDDNDDENQPRR) is disordered. Residues 68–81 (DELEDEVEDDNDDE) show a composition bias toward acidic residues. Positions 69 to 82 (ELEDEVEDDNDDEN) are excised as a propeptide. Gln83 is modified (pyrrolidone carboxylic acid). A propeptide is located at residue Pro155.

This sequence belongs to the 2S seed storage albumins family. As to quaternary structure, heterodimer of a small A and a large B chain linked by disulfide bonds.

Functionally, heat stable 2S seed storage protein having sweetness-inducing activity. The chain is Sweet protein mabinlin-2 from Capparis masaikai (Mabinlang).